Reading from the N-terminus, the 326-residue chain is MKQDASRNAAYTVDCEDYVHVVEFNPFENGDSGNLIAYGGNNYVVIGTCTFQEEEADVEGIQYKTLRTFHHGVRVDGIAWSPETRLDSLPPVIKFCTSAADMKIRLFTSDLQDKNEYKVLEGHTDFINGLVFDPKEGQEIASVSDDHTCRIWNLEGVQTAHFVLHSPGMSVCWHPEETFKLMVAEKNGTIRFYDLLAQQAILSLESEQVPLMSAHWCLKNTFKVGAVAGNDWLIWDITRSSYPQNKRPVHMDRACLFRWSTISENLFATTGYPGKMASQFQIHHLGHPQPILMGSVAVGSGLSWHRTLPLCVIGGDHKLLFWVTEV.

WD repeat units follow at residues 6 to 54, 61 to 109, 115 to 154, 159 to 195, 199 to 237, 242 to 282, and 287 to 324; these read SRNA…FQEE, IQYK…LFTS, NEYK…IWNL, TAHF…FYDL, QAIL…IWDI, YPQN…QFQI, and HPQP…FWVT.

Component of the Nup107-160 subcomplex of the nuclear pore complex (NPC). The Nup107-160 subcomplex includes NUP160, NUP133, NUP107, NUP98, NUP85, NUP43, NUP37, SEH1 and SEC13.

The protein localises to the chromosome. It is found in the centromere. It localises to the kinetochore. Its subcellular location is the nucleus. The protein resides in the nuclear pore complex. In terms of biological role, component of the Nup107-160 subcomplex of the nuclear pore complex (NPC). The Nup107-160 subcomplex is required for the assembly of a functional NPC. The Nup107-160 subcomplex is also required for normal kinetochore microtubule attachment, mitotic progression and chromosome segregation. The sequence is that of Nucleoporin Nup37 (NUP37) from Homo sapiens (Human).